The primary structure comprises 117 residues: UPF0102 protein FTN_0424 (117 aa).

The protein belongs to the UPF0102 family.

This is UPF0102 protein FTN_0424 from Francisella tularensis subsp. novicida (strain U112).